We begin with the raw amino-acid sequence, 255 residues long: Taurine import ATP-binding protein TauB (255 aa).

One can recognise an ABC transporter domain in the interval 2–229 (LNVSGLWAEY…RYAEGEPCRA (228 aa)). 34 to 41 (GPSGCGKT) is an ATP binding site.

The protein belongs to the ABC transporter superfamily. Taurine importer (TC 3.A.1.17.1) family. The complex is composed of two ATP-binding proteins (TauB), two transmembrane proteins (TauC) and a solute-binding protein (TauA).

Its subcellular location is the cell inner membrane. It catalyses the reaction taurine(out) + ATP + H2O = taurine(in) + ADP + phosphate + H(+). In terms of biological role, part of the ABC transporter complex TauABC involved in taurine import. Responsible for energy coupling to the transport system. The polypeptide is Taurine import ATP-binding protein TauB (Yersinia pseudotuberculosis serotype I (strain IP32953)).